Reading from the N-terminus, the 117-residue chain is Transcription elongation factor A protein-like 8 (117 aa).

Residues 1 to 81 (MQKSCDENEG…PEEVIRGVDE (81 aa)) are disordered. A compositionally biased stretch (basic and acidic residues) spans 41 to 81 (NVREETDGSLRGEPAEPSPEPKEDTPARHLNPEEVIRGVDE). Residues 73 to 100 (EEVIRGVDELERLREEIRRVRNKFVLMH) adopt a coiled-coil conformation.

Belongs to the TFS-II family. TFA subfamily. As to expression, highly expressed in kidney. Moderately expressed in heart and lung. Low expression in brain and liver. Expression is up-regulated in nephrectomized kidney.

The protein resides in the nucleus. May be involved in transcriptional regulation. This is Transcription elongation factor A protein-like 8 (Tceal8) from Rattus norvegicus (Rat).